The chain runs to 239 residues: Serine protease SplC (239 aa).

An N-terminal signal peptide occupies residues 1–36; the sequence is MNKNIVIKSMAALAILTSVTGINAAVVEETQQIANA. Catalysis depends on charge relay system residues histidine 75, aspartate 113, and serine 193.

The protein belongs to the peptidase S1B family.

The protein resides in the secreted. The polypeptide is Serine protease SplC (splC) (Staphylococcus aureus (strain USA300 / TCH1516)).